A 207-amino-acid chain; its full sequence is Small ribosomal subunit protein uS4c (207 aa).

The disordered stretch occupies residues 22–51; the sequence is TQKNCTRDFPPGQHGPKKKGGGNQKTKESQ. One can recognise an S4 RNA-binding domain in the interval 97-158; that stretch reads MRLDTIIFRL…NSQNFVKNLL (62 aa).

It belongs to the universal ribosomal protein uS4 family. Part of the 30S ribosomal subunit. Contacts protein S5. The interaction surface between S4 and S5 is involved in control of translational fidelity.

Its subcellular location is the plastid. It localises to the chloroplast. Functionally, one of the primary rRNA binding proteins, it binds directly to 16S rRNA where it nucleates assembly of the body of the 30S subunit. With S5 and S12 plays an important role in translational accuracy. This chain is Small ribosomal subunit protein uS4c (rps4), found in Chlorella vulgaris (Green alga).